We begin with the raw amino-acid sequence, 219 residues long: Vacuolar iron transporter homolog 2.1 (219 aa).

The segment covering 1–15 (MTSNVQLSETNSPRN) has biased composition (polar residues). A disordered region spans residues 1–26 (MTSNVQLSETNSPRNQKTRPRAEKEE). Thr2 carries the post-translational modification N-acetylthreonine. The Cytoplasmic segment spans residues 2 to 37 (TSNVQLSETNSPRNQKTRPRAEKEEVDYMQRAQWLR). The helical transmembrane segment at 38 to 58 (AALLGANDGLVTVASLMMGVG) threads the bilayer. The Vacuolar portion of the chain corresponds to 59 to 67 (SIKEDVKAM). Residues 68–88 (LLVGFAGLVAGACSMAIGEFV) traverse the membrane as a helical segment. The Cytoplasmic portion of the chain corresponds to 89-133 (SVCTQRDIETAQMKRAIEHKTSLSAIDEQEEEEKKERLPNPGQAA). Residues 134–154 (IASALAFSVGAAMPLLGAVFI) traverse the membrane as a helical segment. Residues 155 to 161 (ENHKVRM) are Vacuolar-facing. A helical transmembrane segment spans residues 162–182 (VVVAVVATIALVVFGVTGAVL). The Cytoplasmic portion of the chain corresponds to 183 to 193 (GKTSVVKSSVR). The helical transmembrane segment at 194 to 214 (VVIGGWMAMALTFGLTKFIGS) threads the bilayer. The Vacuolar segment spans residues 215-219 (AAMQI).

This sequence belongs to the CCC1 family. As to expression, highly expressed in roots. inflorescences and at lower levels in leaves.

The protein localises to the vacuole membrane. It carries out the reaction Fe(2+)(in) = Fe(2+)(out). In terms of biological role, vacuolar iron transporter involved in the transfer of iron ions from the cytosol to the vacuole for intracellular iron storage. Involved in regulation of cellular iron homeostasis. Vacuolar iron storage is required for seed embryo and seedling development. This is Vacuolar iron transporter homolog 2.1 from Arabidopsis thaliana (Mouse-ear cress).